A 362-amino-acid chain; its full sequence is tRNA-specific 2-thiouridylase MnmA (362 aa).

Residues 8 to 15 and Met35 contribute to the ATP site; that span reads AMSGGVDS. An interaction with target base in tRNA region spans residues 95-97; sequence NPD. Cys100 serves as the catalytic Nucleophile. Cys100 and Cys196 form a disulfide bridge. Position 124 (Gly124) interacts with ATP. The segment at 146–148 is interaction with tRNA; it reads KDQ. Cys196 serves as the catalytic Cysteine persulfide intermediate. The segment at 303–304 is interaction with tRNA; the sequence is RY.

This sequence belongs to the MnmA/TRMU family.

The protein resides in the cytoplasm. It catalyses the reaction S-sulfanyl-L-cysteinyl-[protein] + uridine(34) in tRNA + AH2 + ATP = 2-thiouridine(34) in tRNA + L-cysteinyl-[protein] + A + AMP + diphosphate + H(+). Functionally, catalyzes the 2-thiolation of uridine at the wobble position (U34) of tRNA, leading to the formation of s(2)U34. The protein is tRNA-specific 2-thiouridylase MnmA of Chlamydia abortus (strain DSM 27085 / S26/3) (Chlamydophila abortus).